A 175-amino-acid polypeptide reads, in one-letter code: MSQALTLARPYARAAFAIACEKGKCMQWSQALTFSAQVANNPIAATLLSHPQLDHEQAAALLSPEGADPAYVRFLEVIAEAHRLDVLLQVAGLYEKLRAEAEHVIKAKITSAIELAPNELNNIVTALKKRFDCEIEVTTGVDHSLIGGAVIDTGNVVIDGSIKSKLTRLQASLTH.

The protein belongs to the ATPase delta chain family. In terms of assembly, F-type ATPases have 2 components, F(1) - the catalytic core - and F(0) - the membrane proton channel. F(1) has five subunits: alpha(3), beta(3), gamma(1), delta(1), epsilon(1). F(0) has three main subunits: a(1), b(2) and c(10-14). The alpha and beta chains form an alternating ring which encloses part of the gamma chain. F(1) is attached to F(0) by a central stalk formed by the gamma and epsilon chains, while a peripheral stalk is formed by the delta and b chains.

It localises to the cell inner membrane. F(1)F(0) ATP synthase produces ATP from ADP in the presence of a proton or sodium gradient. F-type ATPases consist of two structural domains, F(1) containing the extramembraneous catalytic core and F(0) containing the membrane proton channel, linked together by a central stalk and a peripheral stalk. During catalysis, ATP synthesis in the catalytic domain of F(1) is coupled via a rotary mechanism of the central stalk subunits to proton translocation. Its function is as follows. This protein is part of the stalk that links CF(0) to CF(1). It either transmits conformational changes from CF(0) to CF(1) or is implicated in proton conduction. The chain is ATP synthase subunit delta from Xylella fastidiosa (strain M12).